The primary structure comprises 256 residues: Protein FixA (256 aa).

This sequence belongs to the ETF beta-subunit/FixA family. In terms of assembly, heterodimer of FixA and FixB.

It participates in amine and polyamine metabolism; carnitine metabolism. In terms of biological role, required for anaerobic carnitine reduction. May bring reductant to CaiA. The chain is Protein FixA from Escherichia coli O7:K1 (strain IAI39 / ExPEC).